We begin with the raw amino-acid sequence, 218 residues long: Oocyte-specific homeobox protein 7 (218 aa).

A compositionally biased stretch (polar residues) spans 40–72 (SPLVTPGSTMQSSLSVPERNLLQQESEGPSRQS). A disordered region spans residues 40 to 77 (SPLVTPGSTMQSSLSVPERNLLQQESEGPSRQSGCMPL). The segment at residues 94 to 153 (FRKERIVYSKEQQRLLQKHFDECQYPKEKKIVELAVLIGVTKMEIKKWFKNNRAKYRQMN) is a DNA-binding region (homeobox).

It belongs to the paired homeobox family. Obox subfamily. As to expression, specifically expressed in oocytes and early embryos.

It is found in the nucleus. In terms of biological role, transcription factor required for zygotic genome activation (ZGA), a critical event in early embryonic development during which the developmental control passes from maternally provided mRNAs to the expression of the zygotic genome after fertilization. Together with other Obox family members, required in early two-cell stage embryos to kick-start the major ZGA wave by facilitating RNA Polymerase II 'pre-configuration', during which RNA Polymerase II relocates from the initial one-cell stage binding targets to ZGA gene promoters and distal enhancers. Mechanistically, promotes recruitment of RNA Polymerase II from (CG-rich) non-ZGA genes to (CG-poor) ZGA genes at the two-cell stage. Binds to regulatory DNA sequences containing a 5'-ACNCCTTTAATCCCAG-3' sequence motif. Most maternal and zygotic Obox family proteins can compensate for one another. This chain is Oocyte-specific homeobox protein 7, found in Mus musculus (Mouse).